Here is a 1342-residue protein sequence, read N- to C-terminus: DNA-directed RNA polymerase subunit beta (1342 aa).

Belongs to the RNA polymerase beta chain family. As to quaternary structure, the RNAP catalytic core consists of 2 alpha, 1 beta, 1 beta' and 1 omega subunit. When a sigma factor is associated with the core the holoenzyme is formed, which can initiate transcription.

The enzyme catalyses RNA(n) + a ribonucleoside 5'-triphosphate = RNA(n+1) + diphosphate. Its function is as follows. DNA-dependent RNA polymerase catalyzes the transcription of DNA into RNA using the four ribonucleoside triphosphates as substrates. The protein is DNA-directed RNA polymerase subunit beta of Klebsiella pneumoniae subsp. pneumoniae (strain ATCC 700721 / MGH 78578).